A 539-amino-acid polypeptide reads, in one-letter code: Beta-apo-4'-carotenal oxygenase (539 aa).

Residues Glu-228 and Cys-262 contribute to the active site.

It belongs to the aldehyde dehydrogenase family.

The enzyme catalyses 4'-apo-beta-carotenal + NAD(+) + H2O = neurosporaxanthin + NADH + 2 H(+). Its function is as follows. Beta-apo-4'-carotenal oxygenase involved in the last step of synthesis of neurosporaxanthin, a carboxylic apocarotenoid acting as an essential protective pigments and leading to orange pigmentation. Converts the aldehyde beta-apo-4'-carotenal into neurosporaxanthin. Is also able to use shorter apocarotenals as substrates (such as beta-apo-8'-carotenal (C30), beta-apo-10'-carotenal (C27), or the acyclic apocarotenal apo-8'-lycopenal (C30)), indicating wide substrate specificity. Neurosporaxanthin is synthesized from geranyl-geranyl pyrophosphate (GGPP) through several enzymatic activities. Phytoene synthase activity performed by the bifunctional enzyme carAR first produces phytoene from geranyl-geranyl pyrophosphate (GGPP). The phytoene dehydrogenase carB then introduces 4 desaturations to lead to lycopene which is substrate of the carotene cyclase activity of carAR that leads to the production of gamma-carotene. CarB then performs a 5th desaturation reaction to yield torulene. Torulene is the substrate of the dioxidase carT that breaks the molecule, removing five carbon atoms to yield beta-apo-4'-carotenal, whereas the aldehyde dehydrogenase carD mediates the last step by converting beta-apo-4'-carotenal into neurosporaxanthin. This is Beta-apo-4'-carotenal oxygenase from Gibberella fujikuroi (strain CBS 195.34 / IMI 58289 / NRRL A-6831) (Bakanae and foot rot disease fungus).